Reading from the N-terminus, the 250-residue chain is Cobalt transport protein CbiM (250 aa).

Residues Met-1–Ala-24 form the signal peptide. A run of 6 helical transmembrane segments spans residues Leu-32–Ile-52, Met-67–Val-87, Leu-99–Phe-119, Leu-122–Met-142, Val-161–Gln-181, and Ile-203–Phe-223.

It belongs to the CbiM family. In terms of assembly, forms an energy-coupling factor (ECF) transporter complex composed of an ATP-binding protein (A component, CbiO), a transmembrane protein (T component, CbiQ) and 2 possible substrate-capture proteins (S components, CbiM and CbiN) of unknown stoichimetry.

It is found in the cell membrane. The protein operates within cofactor biosynthesis; adenosylcobalamin biosynthesis. In terms of biological role, part of the energy-coupling factor (ECF) transporter complex CbiMNOQ involved in cobalt import. This is Cobalt transport protein CbiM from Desulforamulus reducens (strain ATCC BAA-1160 / DSM 100696 / MI-1) (Desulfotomaculum reducens).